A 72-amino-acid polypeptide reads, in one-letter code: Translation initiation factor IF-1 (72 aa).

In terms of domain architecture, S1-like spans 1–72 (MSKEDMIEFS…SKGRITFRFK (72 aa)).

It belongs to the IF-1 family. As to quaternary structure, component of the 30S ribosomal translation pre-initiation complex which assembles on the 30S ribosome in the order IF-2 and IF-3, IF-1 and N-formylmethionyl-tRNA(fMet); mRNA recruitment can occur at any time during PIC assembly.

The protein localises to the cytoplasm. In terms of biological role, one of the essential components for the initiation of protein synthesis. Stabilizes the binding of IF-2 and IF-3 on the 30S subunit to which N-formylmethionyl-tRNA(fMet) subsequently binds. Helps modulate mRNA selection, yielding the 30S pre-initiation complex (PIC). Upon addition of the 50S ribosomal subunit IF-1, IF-2 and IF-3 are released leaving the mature 70S translation initiation complex. The protein is Translation initiation factor IF-1 of Gluconacetobacter diazotrophicus (strain ATCC 49037 / DSM 5601 / CCUG 37298 / CIP 103539 / LMG 7603 / PAl5).